A 184-amino-acid polypeptide reads, in one-letter code: ATP synthase subunit b 1 (184 aa).

Residues 4 to 24 traverse the membrane as a helical segment; sequence LSILAALAASPAMAATGPFFS.

The protein belongs to the ATPase B chain family. F-type ATPases have 2 components, F(1) - the catalytic core - and F(0) - the membrane proton channel. F(1) has five subunits: alpha(3), beta(3), gamma(1), delta(1), epsilon(1). F(0) has three main subunits: a(1), b(2) and c(10-14). The alpha and beta chains form an alternating ring which encloses part of the gamma chain. F(1) is attached to F(0) by a central stalk formed by the gamma and epsilon chains, while a peripheral stalk is formed by the delta and b chains.

It localises to the cell inner membrane. F(1)F(0) ATP synthase produces ATP from ADP in the presence of a proton or sodium gradient. F-type ATPases consist of two structural domains, F(1) containing the extramembraneous catalytic core and F(0) containing the membrane proton channel, linked together by a central stalk and a peripheral stalk. During catalysis, ATP synthesis in the catalytic domain of F(1) is coupled via a rotary mechanism of the central stalk subunits to proton translocation. Functionally, component of the F(0) channel, it forms part of the peripheral stalk, linking F(1) to F(0). This chain is ATP synthase subunit b 1, found in Cereibacter sphaeroides (strain ATCC 17025 / ATH 2.4.3) (Rhodobacter sphaeroides).